We begin with the raw amino-acid sequence, 309 residues long: Putative HTH-type transcriptional regulatory protein AF_1787 (309 aa).

Positions 131-185 (IREARERLGLSVGDMAKMLGVSRRTVKKYEEGTDTTLSTAAKIEEIIGTFAIKEI) constitute an HTH cro/C1-type domain. The H-T-H motif DNA-binding region spans 142–161 (VGDMAKMLGVSRRTVKKYEE).

This chain is Putative HTH-type transcriptional regulatory protein AF_1787, found in Archaeoglobus fulgidus (strain ATCC 49558 / DSM 4304 / JCM 9628 / NBRC 100126 / VC-16).